The sequence spans 228 residues: Prolactin-2A1 (228 aa).

The first 29 residues, 1–29 (MQLSITHPCCWTLRLLLVSNLLLWENVAL), serve as a signal peptide directing secretion. Cystine bridges form between Cys-87–Cys-203 and Cys-220–Cys-228.

The protein belongs to the somatotropin/prolactin family. As to expression, expressed specifically in the placenta. Highly expressed in invasive trophoblast cells lining the central placental vessel.

Its subcellular location is the secreted. This chain is Prolactin-2A1 (Prl2a1), found in Rattus norvegicus (Rat).